Here is a 4158-residue protein sequence, read N- to C-terminus: Dynein axonemal heavy chain 6 (4158 aa).

The segment at 1–1433 (MTFRATDSEF…VARMALSQYT (1433 aa)) is stem. Position 192 to 199 (192 to 199 (IIRENEHL)) interacts with ATP. Residues 805 to 859 (CVHLGSDLEELNNEVNEVKLQAQDPQILDISADQDKIRLILNNLQSVLADLQKRA) are a coiled coil. AAA regions lie at residues 1434–1655 (YGYE…VLVM), 1715–1948 (STIV…KKCS), 2058–2306 (KYNR…CVQG), and 2408–2659 (DYNL…LRRR). Residues 1472 to 1479 (GPAGTGKT), 1753 to 1760 (GPTGGGKT), 2096 to 2103 (GITGVGKS), and 2447 to 2454 (GVGGTGKQ) each bind ATP. The interval 2676–2961 (SMLSEKRKQI…KTMALTKARL (286 aa)) is stalk. Residues 2901 to 2996 (KRQKLRAAQA…EEISNITGNV (96 aa)) adopt a coiled-coil conformation. AAA regions lie at residues 3042–3272 (LGDP…AIKT) and 3509–3730 (LTDF…NLKL).

The protein belongs to the dynein heavy chain family. As to quaternary structure, the dynein complex consists of at least two heavy chains and a number of intermediate and light chains. Expressed in several tissues, including brain, pituitary, testis and trachea, with highest levels in testis.

It is found in the cytoplasm. Its subcellular location is the cytoskeleton. The protein resides in the cilium axoneme. Its function is as follows. Force generating protein of respiratory cilia. Produces force towards the minus ends of microtubules. Dynein has ATPase activity; the force-producing power stroke is thought to occur on release of ADP. This Homo sapiens (Human) protein is Dynein axonemal heavy chain 6.